Reading from the N-terminus, the 353-residue chain is Protein arginine N-methyltransferase 1 (353 aa).

The SAM-dependent MTase PRMT-type domain maps to 32–353 (KDYYFDSYAH…LSCSTDYRMR (322 aa)). His-45, Arg-54, Gly-78, and Glu-100 together coordinate S-adenosyl-L-methionine. Lys-116 is modified (N6-succinyllysine). Lys-127 participates in a covalent cross-link: Glycyl lysine isopeptide (Lys-Gly) (interchain with G-Cter in ubiquitin). Glu-129 contacts S-adenosyl-L-methionine. Residues Glu-144 and Glu-153 contribute to the active site. Lys-210 and Lys-215 each carry N6-acetyllysine. Ser-286 and Ser-289 each carry phosphoserine.

It belongs to the class I-like SAM-binding methyltransferase superfamily. Protein arginine N-methyltransferase family. As to quaternary structure, homodimer and heterodimer with PRMT8. Homooctamer; individual homodimers associates to form a homooctamer. Interacts with NFATC2IP. Interacts with ILF3 and SUPT5H. Individual homodimers can associate to form a homohexamer. Interacts with FOXO1; the interaction methylates FOXO1, retaining it in the nucleus and increasing its transcriptional activity. Methylation of FOXO1 is increased with oxidative stress. Interacts with CHTOP; the interaction methylates CHTOP, enabling its interaction with the 5FMC complex. Interacts with BTG1, BTG2 and IFNAR1. Interacts with and probably methylates ATXN2L. Component of the methylosome, a 20S complex containing at least CLNS1A/pICln, PRMT5/SKB1, WDR77/MEP50, PRMT1 and ERH. Interacts with DHX9 (via RGG region). Interacts (via N-terminus) with HABP4. Interacts with MAP3K5/ASK1; the interaction results in MAP3K5 methylation by PRMT1 which inhibits MAP3K5 activation. Interacts with TRIM48; the interaction results in ubiquitination of PRMT1 by TRIM48, leading to PRMT1 proteasomal degradation and activation of MAP3K5. Interacts with GATOR1 complex; this interaction is S-adenosyl-L-methionine (SAM) dependent and is perturbated by SAMTOR in a SAM-sensitive manner. Interacts with GFI1; promoting recognition and binding of MRE11 and TP53BP1 substrates by PRMT1. In terms of processing, polyubiquitinated at Lys-127 by the SCF(FBXL17) complex, leading to its subsequent degradation. Ubiquitination is regulated by acetylation at Lys-210 and Lys-215. Polyubiquitinated by E3 ubiquitin-protein ligase TRIM48, leading to suppression of MAP3K5/ASK1 methylation and subsequent MAP3K5 activation. Post-translationally, acetylation at Lys-210 and Lys-215 regulates ubiquitination by the SCF(FBXL17) complex. Acetylated at Lys-215 by p300/EP300. Deacetylated at Lys-210 and Lys-215 by SIRT1. Ubiquitous.

It localises to the nucleus. Its subcellular location is the nucleoplasm. The protein resides in the cytoplasm. The protein localises to the cytosol. It is found in the lysosome membrane. It catalyses the reaction L-arginyl-[protein] + 2 S-adenosyl-L-methionine = N(omega),N(omega)-dimethyl-L-arginyl-[protein] + 2 S-adenosyl-L-homocysteine + 2 H(+). The enzyme catalyses L-arginyl-[protein] + S-adenosyl-L-methionine = N(omega)-methyl-L-arginyl-[protein] + S-adenosyl-L-homocysteine + H(+). It carries out the reaction N(omega)-methyl-L-arginyl-[protein] + S-adenosyl-L-methionine = N(omega),N(omega)-dimethyl-L-arginyl-[protein] + S-adenosyl-L-homocysteine + H(+). Arginine methyltransferase that methylates (mono and asymmetric dimethylation) the guanidino nitrogens of arginyl residues present in proteins such as ESR1, histone H2, H3 and H4, FMR1, ILF3, HNRNPA1, HNRNPD, NFATC2IP, SUPT5H, TAF15, EWS, HABP4, SERBP1, RBM15, FOXO1, CHTOP, MAP3K5/ASK1 and MICU1. Constitutes the main enzyme that mediates monomethylation and asymmetric dimethylation of histone H4 'Arg-3' (H4R3me1 and H4R3me2a, respectively), a specific tag for epigenetic transcriptional activation. May be involved in the regulation of TAF15 transcriptional activity, act as an activator of estrogen receptor (ER)-mediated transactivation, play a key role in neurite outgrowth and act as a negative regulator of megakaryocytic differentiation, by modulating p38 MAPK pathway. Methylates RBM15, promoting ubiquitination and degradation of RBM15. Methylates MRE11 and TP53BP1, promoting the DNA damage response. Methylates FOXO1 and retains it in the nucleus increasing its transcriptional activity. Methylates CHTOP and this methylation is critical for its 5-hydroxymethylcytosine (5hmC)-binding activity. Methylates MAP3K5/ASK1 at 'Arg-85' and 'Arg-87' which promotes association of MAP3K5 with thioredoxin and negatively regulates MAP3K5 association with TRAF2, inhibiting MAP3K5 stimulation and MAP3K5-induced activation of JNK. Methylates H4R3 in genes involved in glioblastomagenesis in a CHTOP- and/or TET1-dependent manner. Plays a role in regulating alternative splicing in the heart. Methylates NPRL2 at 'Arg-78' leading to inhibition of its GTPase activator activity and then the GATOR1 complex and consequently inducing timely mTORC1 activation under methionine-sufficient conditions. The sequence is that of Protein arginine N-methyltransferase 1 from Rattus norvegicus (Rat).